Here is a 107-residue protein sequence, read N- to C-terminus: Large ribosomal subunit protein uL23 (107 aa).

It belongs to the universal ribosomal protein uL23 family. As to quaternary structure, part of the 50S ribosomal subunit. Contacts protein L29, and trigger factor when it is bound to the ribosome.

One of the early assembly proteins it binds 23S rRNA. One of the proteins that surrounds the polypeptide exit tunnel on the outside of the ribosome. Forms the main docking site for trigger factor binding to the ribosome. The chain is Large ribosomal subunit protein uL23 from Gluconobacter oxydans (strain 621H) (Gluconobacter suboxydans).